Reading from the N-terminus, the 317-residue chain is Protein phosphatase 1 regulatory subunit 3C (317 aa).

The PP1-binding motif motif lies at 84-87; the sequence is RVVF. The interval 141–263 is interaction with EPM2A; sequence PSSDYLSFRD…YRIVHVQWKP (123 aa). In terms of domain architecture, CBM21 spans 149 to 257; it reads RDRFQKNFVC…NNEAQNYRIV (109 aa).

Interacts with PPP1CC catalytic subunit of PP1 and associates with glycogen. Forms complexes with glycogen phosphorylase, glycogen synthase and phosphorylase kinase which is necessary for its regulation of PP1 activity. Also interacts with EPM2A/laforin. Post-translationally, ubiquitinated by NHLRC1/malin in a EPM2A/laforin-dependent manner.

Its function is as follows. Acts as a glycogen-targeting subunit for PP1 and regulates its activity. Activates glycogen synthase, reduces glycogen phosphorylase activity and limits glycogen breakdown. Dramatically increases basal and insulin-stimulated glycogen synthesis upon overexpression in a variety of cell types. This chain is Protein phosphatase 1 regulatory subunit 3C, found in Rattus norvegicus (Rat).